The following is a 394-amino-acid chain: 1-deoxy-D-xylulose 5-phosphate reductoisomerase (394 aa).

NADPH is bound by residues Thr12, Gly13, Ser14, Ile15, Gly38, Asn41, and Asn132. Lys133 is a binding site for 1-deoxy-D-xylulose 5-phosphate. Glu134 is an NADPH binding site. Position 156 (Asp156) interacts with Mn(2+). Residues Ser157, Glu158, Ser182, and His205 each coordinate 1-deoxy-D-xylulose 5-phosphate. Residue Glu158 coordinates Mn(2+). Gly211 is a binding site for NADPH. 1-deoxy-D-xylulose 5-phosphate is bound by residues Ser218, Asn223, Lys224, and Glu227. Residue Glu227 participates in Mn(2+) binding.

It belongs to the DXR family. Mg(2+) is required as a cofactor. It depends on Mn(2+) as a cofactor.

The enzyme catalyses 2-C-methyl-D-erythritol 4-phosphate + NADP(+) = 1-deoxy-D-xylulose 5-phosphate + NADPH + H(+). It participates in isoprenoid biosynthesis; isopentenyl diphosphate biosynthesis via DXP pathway; isopentenyl diphosphate from 1-deoxy-D-xylulose 5-phosphate: step 1/6. In terms of biological role, catalyzes the NADPH-dependent rearrangement and reduction of 1-deoxy-D-xylulose-5-phosphate (DXP) to 2-C-methyl-D-erythritol 4-phosphate (MEP). This chain is 1-deoxy-D-xylulose 5-phosphate reductoisomerase, found in Paenarthrobacter aurescens (strain TC1).